A 399-amino-acid chain; its full sequence is Leu/Ile/Val-binding protein homolog 7 (399 aa).

An N-terminal signal peptide occupies residues Met1–Ala22.

The protein belongs to the leucine-binding protein family.

In terms of biological role, component of an amino-acid transport system. The sequence is that of Leu/Ile/Val-binding protein homolog 7 from Brucella melitensis biotype 1 (strain ATCC 23456 / CCUG 17765 / NCTC 10094 / 16M).